A 155-amino-acid polypeptide reads, in one-letter code: Protein LOL2 (155 aa).

Met-1 carries the post-translational modification N-acetylmethionine. A disordered region spans residues Met-1–Leu-35. Putative zinc finger regions lie at residues Gln-60–Val-90 and Gln-98–Ile-128. The segment at Glu-130–Asn-155 is disordered. Residues Ser-138 to Ser-149 are compositionally biased toward polar residues.

Its subcellular location is the nucleus. In terms of biological role, putative zinc finger that may be involved in programmed cell death and defense response. The protein is Protein LOL2 (LOL2) of Arabidopsis thaliana (Mouse-ear cress).